The primary structure comprises 262 residues: Acyl-[acyl-carrier-protein]--UDP-N-acetylglucosamine O-acyltransferase (262 aa).

The protein belongs to the transferase hexapeptide repeat family. LpxA subfamily. As to quaternary structure, homotrimer.

The protein resides in the cytoplasm. The catalysed reaction is a (3R)-hydroxyacyl-[ACP] + UDP-N-acetyl-alpha-D-glucosamine = a UDP-3-O-[(3R)-3-hydroxyacyl]-N-acetyl-alpha-D-glucosamine + holo-[ACP]. Its pathway is glycolipid biosynthesis; lipid IV(A) biosynthesis; lipid IV(A) from (3R)-3-hydroxytetradecanoyl-[acyl-carrier-protein] and UDP-N-acetyl-alpha-D-glucosamine: step 1/6. Involved in the biosynthesis of lipid A, a phosphorylated glycolipid that anchors the lipopolysaccharide to the outer membrane of the cell. This Burkholderia orbicola (strain MC0-3) protein is Acyl-[acyl-carrier-protein]--UDP-N-acetylglucosamine O-acyltransferase.